The chain runs to 302 residues: Glutaminase (302 aa).

Substrate is bound by residues serine 61, asparagine 111, glutamate 155, asparagine 162, tyrosine 186, tyrosine 238, and valine 256.

Belongs to the glutaminase family. As to quaternary structure, homotetramer.

The catalysed reaction is L-glutamine + H2O = L-glutamate + NH4(+). In Pseudomonas fluorescens (strain Pf0-1), this protein is Glutaminase.